The following is a 405-amino-acid chain: Probable tRNA sulfurtransferase (405 aa).

The 106-residue stretch at 60-165 folds into the THUMP domain; sequence TEVDKRLKKV…QDAVYISNQL (106 aa). ATP is bound by residues 183–184, 208–209, Arg265, Gly287, and Gln296; these read ML and HF.

Belongs to the ThiI family.

It is found in the cytoplasm. The catalysed reaction is [ThiI sulfur-carrier protein]-S-sulfanyl-L-cysteine + a uridine in tRNA + 2 reduced [2Fe-2S]-[ferredoxin] + ATP + H(+) = [ThiI sulfur-carrier protein]-L-cysteine + a 4-thiouridine in tRNA + 2 oxidized [2Fe-2S]-[ferredoxin] + AMP + diphosphate. The enzyme catalyses [ThiS sulfur-carrier protein]-C-terminal Gly-Gly-AMP + S-sulfanyl-L-cysteinyl-[cysteine desulfurase] + AH2 = [ThiS sulfur-carrier protein]-C-terminal-Gly-aminoethanethioate + L-cysteinyl-[cysteine desulfurase] + A + AMP + 2 H(+). It participates in cofactor biosynthesis; thiamine diphosphate biosynthesis. Catalyzes the ATP-dependent transfer of a sulfur to tRNA to produce 4-thiouridine in position 8 of tRNAs, which functions as a near-UV photosensor. Also catalyzes the transfer of sulfur to the sulfur carrier protein ThiS, forming ThiS-thiocarboxylate. This is a step in the synthesis of thiazole, in the thiamine biosynthesis pathway. The sulfur is donated as persulfide by IscS. In Lactobacillus acidophilus (strain ATCC 700396 / NCK56 / N2 / NCFM), this protein is Probable tRNA sulfurtransferase.